Reading from the N-terminus, the 117-residue chain is Acidic phospholipase A2 PA-1G (117 aa).

Disulfide bonds link C11–C71, C27–C117, C29–C45, C44–C98, C51–C91, C60–C84, and C78–C89. Ca(2+) contacts are provided by Y28, G30, and G32. Residue H48 is part of the active site. D49 serves as a coordination point for Ca(2+). D92 is a catalytic residue.

The protein belongs to the phospholipase A2 family. Group I subfamily. D49 sub-subfamily. Requires Ca(2+) as cofactor. As to expression, expressed by the venom gland.

The protein localises to the secreted. It catalyses the reaction a 1,2-diacyl-sn-glycero-3-phosphocholine + H2O = a 1-acyl-sn-glycero-3-phosphocholine + a fatty acid + H(+). Functionally, PLA2 catalyzes the calcium-dependent hydrolysis of the 2-acyl groups in 3-sn-phosphoglycerides. The polypeptide is Acidic phospholipase A2 PA-1G (Pseudechis australis (Mulga snake)).